Consider the following 228-residue polypeptide: MRKKRVITCVMAASLTLGSLLPAGYASAKEDSKTTPSYEELALHYKMKSEKISSNGKLVEIEYVSGNETHKVQMNGNNHTVKVDGIEQKGLNFEYDENVAKRTNYENNNLKSNEFTTQAAKPKKGYHYVGTLSGHTKAAKNALSVTMSLVGIVPGLGWGSKAATILFSYWAKEQIPDAYYKYDLYEKGAMTDSWYQYATVQFFEDKAHKKKMGKPWTSTPAKVDLPNS.

An N-terminal signal peptide occupies residues 1 to 28 (MRKKRVITCVMAASLTLGSLLPAGYASA).

This is an uncharacterized protein from Bacillus subtilis (strain 168).